The primary structure comprises 353 residues: sn-glycerol-3-phosphate import ATP-binding protein UgpC (353 aa).

An ABC transporter domain is found at 4-234; that stretch reads ILLNDVRKSY…PASEFVAGFI (231 aa). 36–43 provides a ligand contact to ATP; it reads GPSGCGKS.

The protein belongs to the ABC transporter superfamily. sn-glycerol-3-phosphate importer (TC 3.A.1.1.3) family. As to quaternary structure, the complex is composed of two ATP-binding proteins (UgpC), two transmembrane proteins (UgpA and UgpE) and a solute-binding protein (UgpB).

It is found in the cell inner membrane. It carries out the reaction sn-glycerol 3-phosphate(out) + ATP + H2O = sn-glycerol 3-phosphate(in) + ADP + phosphate + H(+). In terms of biological role, part of the ABC transporter complex UgpBAEC involved in sn-glycerol-3-phosphate (G3P) import. Responsible for energy coupling to the transport system. This Paracoccus denitrificans (strain Pd 1222) protein is sn-glycerol-3-phosphate import ATP-binding protein UgpC.